A 507-amino-acid chain; its full sequence is Histidine--tRNA ligase (507 aa).

This sequence belongs to the class-II aminoacyl-tRNA synthetase family. In terms of assembly, homodimer.

The protein localises to the cytoplasm. It carries out the reaction tRNA(His) + L-histidine + ATP = L-histidyl-tRNA(His) + AMP + diphosphate + H(+). This chain is Histidine--tRNA ligase, found in Rhizobium leguminosarum bv. trifolii (strain WSM2304).